We begin with the raw amino-acid sequence, 178 residues long: Gamma-crystallin S (178 aa).

Ser2 bears the N-acetylserine mark. The tract at residues 2–5 is N-terminal arm; the sequence is SKSG. Beta/gamma crystallin 'Greek key' domains follow at residues 6–44 and 45–87; these read TKIT…RVEG and GTWA…RAVH. The connecting peptide stretch occupies residues 88 to 93; it reads LSSGGQ. Beta/gamma crystallin 'Greek key' domains are found at residues 94 to 134 and 135 to 177; these read YKIQ…KVLD and GVWI…RRIV.

Belongs to the beta/gamma-crystallin family. In terms of assembly, monomer.

Functionally, crystallins are the dominant structural components of the vertebrate eye lens. This Canis lupus familiaris (Dog) protein is Gamma-crystallin S (CRYGS).